Here is an 84-residue protein sequence, read N- to C-terminus: Small ribosomal subunit protein bS16 (84 aa).

It belongs to the bacterial ribosomal protein bS16 family.

The chain is Small ribosomal subunit protein bS16 from Koribacter versatilis (strain Ellin345).